Reading from the N-terminus, the 1361-residue chain is DNA-directed RNA polymerase subunit beta' (1361 aa).

4 residues coordinate Zn(2+): C69, C71, C84, and C87. Mg(2+)-binding residues include D460, D462, and D464. 4 residues coordinate Zn(2+): C808, C882, C889, and C892.

Belongs to the RNA polymerase beta' chain family. The RNAP catalytic core consists of 2 alpha, 1 beta, 1 beta' and 1 omega subunit. When a sigma factor is associated with the core the holoenzyme is formed, which can initiate transcription. The cofactor is Mg(2+). Zn(2+) serves as cofactor.

The enzyme catalyses RNA(n) + a ribonucleoside 5'-triphosphate = RNA(n+1) + diphosphate. In terms of biological role, DNA-dependent RNA polymerase catalyzes the transcription of DNA into RNA using the four ribonucleoside triphosphates as substrates. The sequence is that of DNA-directed RNA polymerase subunit beta' from Rickettsia bellii (strain RML369-C).